A 444-amino-acid polypeptide reads, in one-letter code: 23S rRNA (uracil(1939)-C(5))-methyltransferase RlmD (444 aa).

The 60-residue stretch at 11 to 70 (NSIKNHILKNIKVEKLDHRGRGLAYFQNKPLFIDGALAGELLEVQIVESKKRYSKGKIKK) folds into the TRAM domain. [4Fe-4S] cluster contacts are provided by C83, C89, C92, and C171. S-adenosyl-L-methionine-binding residues include Q277, F306, N311, E327, D354, and D376. Residue C402 is the Nucleophile of the active site.

It belongs to the class I-like SAM-binding methyltransferase superfamily. RNA M5U methyltransferase family. RlmD subfamily.

It catalyses the reaction uridine(1939) in 23S rRNA + S-adenosyl-L-methionine = 5-methyluridine(1939) in 23S rRNA + S-adenosyl-L-homocysteine + H(+). Catalyzes the formation of 5-methyl-uridine at position 1939 (m5U1939) in 23S rRNA. In Psychromonas ingrahamii (strain DSM 17664 / CCUG 51855 / 37), this protein is 23S rRNA (uracil(1939)-C(5))-methyltransferase RlmD.